We begin with the raw amino-acid sequence, 323 residues long: Aquaporin-4 (323 aa).

Topologically, residues 1-36 are cytoplasmic; the sequence is MSDGAAARRWGKCGPPCSRESIMVAFKGVWTQAFWK. Residues Cys13 and Cys17 are each lipidated (S-palmitoyl cysteine). Residues 37–57 traverse the membrane as a helical segment; that stretch reads AVTAEFLAMLIFVLLSVGSTI. The Extracellular portion of the chain corresponds to 58–69; sequence NWGGSENPLPVD. Residues 70-89 traverse the membrane as a helical segment; that stretch reads MVLISLCFGLSIATMVQCFG. Topologically, residues 90-93 are cytoplasmic; sequence HISG. An intramembrane region (discontinuously helical) is located at residues 94 to 101; sequence GHINPAVT. The short motif at 97-99 is the NPA 1 element; it reads NPA. The Cytoplasmic portion of the chain corresponds to 102–115; it reads VAMVCTRKISIAKS. Ser111 is modified (phosphoserine; by PKG). The helical transmembrane segment at 116-136 threads the bilayer; sequence VFYITAQCLGAIIGAGILYLV. The Extracellular portion of the chain corresponds to 137 to 155; it reads TPPSVVGGLGVTTVHGNLT. An N-linked (GlcNAc...) asparagine glycan is attached at Asn153. A helical transmembrane segment spans residues 156–176; it reads AGHGLLVELIITFQLVFTIFA. At 177 to 184 the chain is on the cytoplasmic side; that stretch reads SCDSKRTD. Ser180 carries the post-translational modification Phosphoserine; by PKC. The helical transmembrane segment at 185–205 threads the bilayer; it reads VTGSVALAIGFSVAIGHLFAI. Topologically, residues 206-208 are extracellular; that stretch reads NYT. Residues 209–222 constitute an intramembrane region (discontinuously helical); that stretch reads GASMNPARSFGPAV. The short motif at 213 to 215 is the NPA 2 element; sequence NPA. Residues 223-231 lie on the Extracellular side of the membrane; that stretch reads IMGNWENHW. A helical transmembrane segment spans residues 232–252; the sequence is IYWVGPIIGAVLAGALYEYVF. The Cytoplasmic segment spans residues 253 to 323; the sequence is CPDVELKRRL…DSSGEVLSSV (71 aa). 2 positions are modified to phosphoserine: Ser276 and Ser285. Phosphothreonine is present on Thr289. At Ser321 the chain carries Phosphoserine.

The protein belongs to the MIP/aquaporin (TC 1.A.8) family. As to quaternary structure, homotetramer. The tetramers can form oligomeric arrays in membranes. The size of the oligomers differs between tissues and is smaller in skeletal muscle than in brain. Interaction between AQP4 oligomeric arrays in close-by cells can contribute to cell-cell adhesion. Part of a complex containing MLC1, TRPV4, HEPACAM and ATP1B1. In terms of processing, phosphorylation by PKC at Ser-180 promotes internalization from the cell membrane, reducing the conductance by 50%. Phosphorylation by PKG at Ser-111 in response to glutamate increases conductance by 40%. Isoform Long: Palmitoylated on its N-terminal region. Isoform 3: Not palmitoylated. In terms of tissue distribution, detected in cerebellum. Detected on pericapillary astrocyte endfeet in cerebellum, and in skeletal muscle. Detected in glial lamellae in the hypothalamus (at protein level). Abundant in mature brain cortex, cerebellum and spinal cord. Highly expressed in the ependymal cell lining the aqueductal system and over the space of the brain in contact with the subarachnoid space. Detected in paraventricular and supraoptic nuclei, the granule cell layer of the dentate gyrus and the Purkinje cell layer in the cerebellum. Only weakly detectable in eye, kidney, intestine, and lung.

The protein resides in the cell membrane. It localises to the basolateral cell membrane. It is found in the endosome membrane. Its subcellular location is the sarcolemma. The protein localises to the cell projection. It catalyses the reaction H2O(in) = H2O(out). Functionally, forms a water-specific channel. Plays an important role in brain water homeostasis and in glymphatic solute transport. Required for a normal rate of water exchange across the blood brain interface. Required for normal levels of cerebrospinal fluid influx into the brain cortex and parenchyma along paravascular spaces that surround penetrating arteries, and for normal drainage of interstitial fluid along paravenous drainage pathways. Thereby, it is required for normal clearance of solutes from the brain interstitial fluid, including soluble beta-amyloid peptides derived from APP. Plays a redundant role in urinary water homeostasis and urinary concentrating ability. The polypeptide is Aquaporin-4 (Aqp4) (Rattus norvegicus (Rat)).